A 338-amino-acid polypeptide reads, in one-letter code: Protein SGT1 homolog (338 aa).

Position 2 is an N-acetylalanine (A2). TPR repeat units follow at residues A11 to D45, A46 to S79, and S80 to D113. Residues Q142–E231 form the CS domain. The SGS domain occupies L249 to Y338. S254 carries the phosphoserine modification. Position 257 is a phosphothreonine (T257). Residue K268 forms a Glycyl lysine isopeptide (Lys-Gly) (interchain with G-Cter in SUMO1); alternate linkage. K268 participates in a covalent cross-link: Glycyl lysine isopeptide (Lys-Gly) (interchain with G-Cter in SUMO2); alternate. A Phosphoserine modification is found at S304.

This sequence belongs to the SGT1 family. In terms of assembly, probably associates with SCF (SKP1-CUL1-F-box protein) complex through interaction with SKP1. Interacts with S100A6. Interacts with HSP90. In terms of processing, phosphorylated at Ser-254 and Ser-304, dephosphorylation promotes nuclear translocation, most likely due to disruption of the SUGT1-HSP90 complex.

The protein localises to the cytoplasm. The protein resides in the nucleus. May play a role in ubiquitination and subsequent proteasomal degradation of target proteins. This Bos taurus (Bovine) protein is Protein SGT1 homolog.